Reading from the N-terminus, the 441-residue chain is GTPase Der (441 aa).

EngA-type G domains follow at residues 4-169 and 178-353; these read PIVA…PEGS and PKVA…DAQT. Residues 10-17, 57-61, 120-123, 184-191, 231-235, and 296-299 each bind GTP; these read GRPNVGKS, DTGGI, NKVD, GKPNVGKS, DTAGL, and NKWD. The KH-like domain maps to 354-438; the sequence is MRIPTGVLNE…SIRFINRERK (85 aa).

The protein belongs to the TRAFAC class TrmE-Era-EngA-EngB-Septin-like GTPase superfamily. EngA (Der) GTPase family. As to quaternary structure, associates with the 50S ribosomal subunit.

Functionally, GTPase that plays an essential role in the late steps of ribosome biogenesis. The sequence is that of GTPase Der from Lachnospira eligens (strain ATCC 27750 / DSM 3376 / VPI C15-48 / C15-B4) (Eubacterium eligens).